Consider the following 227-residue polypeptide: Transmembrane emp24 domain-containing protein 1 (227 aa).

An N-terminal signal peptide occupies residues 1–23 (MMAAGTALGLALWLLLPPVGVGG). The Extracellular portion of the chain corresponds to 24–194 (AGPPPIQDGE…LQEGNLERVN (171 aa)). A GOLD domain is found at 43–125 (KQCFYQSAPA…EKLVFFELIF (83 aa)). A coiled-coil region spans residues 145 to 170 (EILEVKMEDIKESIETMRIRLERSIQ). The helical transmembrane segment at 195–215 (FWSAVNVAVLLLVAVLQVCTL) threads the bilayer. The Cytoplasmic portion of the chain corresponds to 216-227 (KRFFQDKRPVPM). Positions 218–219 (FF) match the COPII vesicle coat-binding motif. The COPI vesicle coat-binding signature appears at 218–227 (FFQDKRPVPM).

This sequence belongs to the EMP24/GP25L family. Homodimer in endoplasmic reticulum, endoplasmic reticulum-Golgi intermediate compartment and cis-Golgi network. Interacts with IL1RL1. Interacts with RNF26; this interaction is important to modulate innate immune signaling through the cGAS-STING pathway.

It localises to the cell membrane. Its subcellular location is the endoplasmic reticulum membrane. The protein resides in the golgi apparatus. It is found in the cis-Golgi network membrane. The protein localises to the endoplasmic reticulum-Golgi intermediate compartment membrane. Functionally, potential role in vesicular protein trafficking, mainly in the early secretory pathway. May act as a cargo receptor at the lumenal side for incorporation of secretory cargo molecules into transport vesicles and may be involved in vesicle coat formation at the cytoplasmic side. Plays a positive role in IL-33-mediated IL-8 and IL-6 production by interacting with interleukin-33 receptor IL1RL1. Plays also a role in the modulation of innate immune signaling through the cGAS-STING pathway by interacting with RNF26. In Bos taurus (Bovine), this protein is Transmembrane emp24 domain-containing protein 1 (TMED1).